Reading from the N-terminus, the 677-residue chain is Transketolase (677 aa).

Position 27 (H27) interacts with substrate. Thiamine diphosphate-binding positions include H66 and 114–116 (GPL). D155 contributes to the Mg(2+) binding site. Thiamine diphosphate is bound by residues G156 and N185. Residues N185 and I187 each coordinate Mg(2+). Residues H261, R356, and S383 each contribute to the substrate site. H261 is a thiamine diphosphate binding site. Residues E415 and F442 each coordinate thiamine diphosphate. Residue E415 is the Proton donor of the active site. Substrate contacts are provided by H466, D474, and R525.

This sequence belongs to the transketolase family. As to quaternary structure, homodimer. Requires Mg(2+) as cofactor. It depends on Ca(2+) as a cofactor. The cofactor is Mn(2+). Co(2+) serves as cofactor. Thiamine diphosphate is required as a cofactor.

It carries out the reaction D-sedoheptulose 7-phosphate + D-glyceraldehyde 3-phosphate = aldehydo-D-ribose 5-phosphate + D-xylulose 5-phosphate. In terms of biological role, catalyzes the transfer of a two-carbon ketol group from a ketose donor to an aldose acceptor, via a covalent intermediate with the cofactor thiamine pyrophosphate. The protein is Transketolase (TKT) of Scheffersomyces stipitis (strain ATCC 58785 / CBS 6054 / NBRC 10063 / NRRL Y-11545) (Yeast).